The primary structure comprises 507 residues: MVTIRADEISNIIRERIEQYNREVKIVNTGTVLQVGDGIARIHGLDEVMAGELVEFEEGTIGIALNLESNNVGVVLMGDGLLIQEGSSVKATGRIAQIPVSEAYLGRVINALAKPIDGRGEISASEFRLIESAAPGIISRRSVYEPLQTGLIAIDSMIPIGRGQRELIIGDRQTGKTAVATDTILNQQGQNVICVYVAIGQKASSVAQVVTTLQERGAMEYTIVVAETADSPATLQYLAPYTGAALAEYFMYRERHTLIIYDDPSKQAQAYRQMSLLLRRPPGREAYPGDVFYLHSRLLERAAKLSSSLGEGSMTALPIVETQSGDVSAYIPTNVISITDGQIFLSADLFNSGIRPAINVGISVSRVGSAAQIKAMKQVAGKLKLELAQFAELEAFAQFASDLDKATQNQLARGQRLRELLKQSQSAPLTVEEQIMTIYTGTNGYLDSLEVGQVRKFLVELRTYLKTNKPQFQEIISSTKTFTEEAEALLKEAIQEQMDRFILQEQA.

170 to 177 lines the ATP pocket; the sequence is GDRQTGKT.

This sequence belongs to the ATPase alpha/beta chains family. As to quaternary structure, F-type ATPases have 2 components, CF(1) - the catalytic core - and CF(0) - the membrane proton channel. CF(1) has five subunits: alpha(3), beta(3), gamma(1), delta(1), epsilon(1). CF(0) has four main subunits: a, b, b' and c.

It localises to the plastid. The protein resides in the chloroplast thylakoid membrane. The catalysed reaction is ATP + H2O + 4 H(+)(in) = ADP + phosphate + 5 H(+)(out). Its function is as follows. Produces ATP from ADP in the presence of a proton gradient across the membrane. The alpha chain is a regulatory subunit. This chain is ATP synthase subunit alpha, chloroplastic, found in Nicotiana sylvestris (Wood tobacco).